A 391-amino-acid polypeptide reads, in one-letter code: Argininosuccinate synthase (391 aa).

6 to 14 contacts ATP; the sequence is AYSGGLDTT. Y84 serves as a coordination point for L-citrulline. G114 is an ATP binding site. L-aspartate contacts are provided by T116, N120, and D121. Position 120 (N120) interacts with L-citrulline. L-citrulline-binding residues include R124, S171, S180, E253, and Y265.

This sequence belongs to the argininosuccinate synthase family. Type 1 subfamily. Homotetramer.

The protein resides in the cytoplasm. The catalysed reaction is L-citrulline + L-aspartate + ATP = 2-(N(omega)-L-arginino)succinate + AMP + diphosphate + H(+). It participates in amino-acid biosynthesis; L-arginine biosynthesis; L-arginine from L-ornithine and carbamoyl phosphate: step 2/3. The sequence is that of Argininosuccinate synthase from Metallosphaera sedula (strain ATCC 51363 / DSM 5348 / JCM 9185 / NBRC 15509 / TH2).